A 192-amino-acid polypeptide reads, in one-letter code: Protein GrpE (192 aa).

The interval 1-34 (MSSKEQKTPNEQVSEEMENAAEQQVEATQETGEG) is disordered. Positions 21-31 (AEQQVEATQET) are enriched in polar residues.

It belongs to the GrpE family. In terms of assembly, homodimer.

It localises to the cytoplasm. Functionally, participates actively in the response to hyperosmotic and heat shock by preventing the aggregation of stress-denatured proteins, in association with DnaK and GrpE. It is the nucleotide exchange factor for DnaK and may function as a thermosensor. Unfolded proteins bind initially to DnaJ; upon interaction with the DnaJ-bound protein, DnaK hydrolyzes its bound ATP, resulting in the formation of a stable complex. GrpE releases ADP from DnaK; ATP binding to DnaK triggers the release of the substrate protein, thus completing the reaction cycle. Several rounds of ATP-dependent interactions between DnaJ, DnaK and GrpE are required for fully efficient folding. The chain is Protein GrpE from Yersinia enterocolitica serotype O:8 / biotype 1B (strain NCTC 13174 / 8081).